A 631-amino-acid chain; its full sequence is Translation factor GUF1, mitochondrial (631 aa).

The N-terminal 19 residues, 1–19 (MFNRRLLRHVRYAFQQVRS), are a transit peptide targeting the mitochondrion. A tr-type G domain is found at 33–214 (ERYRNFSIVA…AIVDRIPPPT (182 aa)). GTP is bound by residues 42-49 (AHVDHGKS), 107-111 (DTPGH), and 161-164 (NKID).

Belongs to the TRAFAC class translation factor GTPase superfamily. Classic translation factor GTPase family. LepA subfamily.

It localises to the mitochondrion inner membrane. The enzyme catalyses GTP + H2O = GDP + phosphate + H(+). Promotes mitochondrial protein synthesis. May act as a fidelity factor of the translation reaction, by catalyzing a one-codon backward translocation of tRNAs on improperly translocated ribosomes. Binds to mitochondrial ribosomes in a GTP-dependent manner. The polypeptide is Translation factor GUF1, mitochondrial (Kluyveromyces lactis (strain ATCC 8585 / CBS 2359 / DSM 70799 / NBRC 1267 / NRRL Y-1140 / WM37) (Yeast)).